A 281-amino-acid chain; its full sequence is MKIRNPAHAGTFYPATREELVKSIESSFTHPLGPGRLPQRGGGSGEQAIAYIPPHAGYMYSGPIAAHVYYDMSLGRKPDVVVLLGPNHTGLGLAASLWDEGVWRTPLGEVEVDSEAGRLVVEYSGIVAPDDEGHIYEHSLEVQLPFLQYLYGGDFRIVPIVVLHQTLDISIRIARAYHRLREENGVNAVLVATSDLNHYEPYEENKRKDLLLLKAIEEGDPEAVFKTIEAHAISACGPSPIAAAVEAGRLAGVKPRVLAYANSGDVTGEKAWVVGYPAVRV.

The protein belongs to the MEMO1 family.

This Aeropyrum pernix (strain ATCC 700893 / DSM 11879 / JCM 9820 / NBRC 100138 / K1) protein is MEMO1 family protein APE_1771.